The following is a 49-amino-acid chain: Disintegrin echistatin-gamma (49 aa).

Residues 1–47 (DCASGPCCRDCKFLEEGTICNMARGDDMDDYCNGKTCDCPRNPHKWP) enclose the Disintegrin domain. Intrachain disulfides connect C2–C11, C7–C32, C8–C37, and C20–C39. A Cell attachment site motif is present at residues 24-26 (RGD).

Belongs to the venom metalloproteinase (M12B) family. P-II subfamily. P-IIa sub-subfamily. Monomer. Expressed by the venom gland.

Its subcellular location is the secreted. Its function is as follows. Has antiplatelet activities on guinea pig, followed by human, rabbit and rat platelet-rich plasma. The protein is Disintegrin echistatin-gamma of Echis pyramidum leakeyi (Leakey's carpet viper).